The primary structure comprises 72 residues: UPF0346 protein GTNG_1419 (72 aa).

This sequence belongs to the UPF0346 family.

This Geobacillus thermodenitrificans (strain NG80-2) protein is UPF0346 protein GTNG_1419.